Here is a 596-residue protein sequence, read N- to C-terminus: Nodulation outer protein X (596 aa).

The protein resides in the secreted. The polypeptide is Nodulation outer protein X (nopX) (Sinorhizobium fredii (strain NBRC 101917 / NGR234)).